Reading from the N-terminus, the 361-residue chain is Small ribosomal subunit protein mS46 (361 aa).

Residues Met1–Tyr14 constitute a mitochondrion transit peptide. Residues Ala37 to Gln99 are disordered. The span at Lys43–Met52 shows a compositional bias: basic and acidic residues. The segment covering Gly59 to Asn68 has biased composition (low complexity). Positions Lys69–Asp91 are enriched in basic and acidic residues.

The protein belongs to the mitochondrion-specific ribosomal protein mS46 family. In terms of assembly, component of the mitochondrial small ribosomal subunit (mt-SSU). Mature yeast 74S mitochondrial ribosomes consist of a small (37S) and a large (54S) subunit. The 37S small subunit contains a 15S ribosomal RNA (15S mt-rRNA) and 34 different proteins. The 54S large subunit contains a 21S rRNA (21S mt-rRNA) and 46 different proteins.

It is found in the mitochondrion. In terms of biological role, component of the mitochondrial ribosome (mitoribosome), a dedicated translation machinery responsible for the synthesis of mitochondrial genome-encoded proteins, including at least some of the essential transmembrane subunits of the mitochondrial respiratory chain. The mitoribosomes are attached to the mitochondrial inner membrane and translation products are cotranslationally integrated into the membrane. The sequence is that of Small ribosomal subunit protein mS46 (RSM28) from Saccharomyces cerevisiae (strain ATCC 204508 / S288c) (Baker's yeast).